We begin with the raw amino-acid sequence, 249 residues long: E3 ubiquitin-protein ligase RMA1 (249 aa).

The RING-type zinc finger occupies 48 to 97; that stretch reads CNICLDSVQEPVVTLCGHLFCWPCIHKWLDVQSFSTSDEYQRHRQCPVCK. Residues 231 to 248 traverse the membrane as a helical; Anchor for type IV membrane protein segment; the sequence is LGRIFFFFMCCVVLCLLL.

Ubiquitous. Highly expressed in roots.

The protein resides in the endoplasmic reticulum membrane. It carries out the reaction S-ubiquitinyl-[E2 ubiquitin-conjugating enzyme]-L-cysteine + [acceptor protein]-L-lysine = [E2 ubiquitin-conjugating enzyme]-L-cysteine + N(6)-ubiquitinyl-[acceptor protein]-L-lysine.. It participates in protein modification; protein ubiquitination. E3 ubiquitin-protein ligase that promotes the ubiquitination and proteasomal degradation of aquaporin PIP2-1. Forms a ubiquitin ligase complex in cooperation with the E2 enzymes UCB8/UCB10. This Arabidopsis thaliana (Mouse-ear cress) protein is E3 ubiquitin-protein ligase RMA1 (RMA1).